A 292-amino-acid chain; its full sequence is NAD kinase (292 aa).

Aspartate 73 acts as the Proton acceptor in catalysis. Residues 73-74 (DG), 147-148 (NE), histidine 158, arginine 175, aspartate 177, 188-193 (TAYSLS), and glutamine 247 contribute to the NAD(+) site.

This sequence belongs to the NAD kinase family. It depends on a divalent metal cation as a cofactor.

The protein localises to the cytoplasm. It carries out the reaction NAD(+) + ATP = ADP + NADP(+) + H(+). Involved in the regulation of the intracellular balance of NAD and NADP, and is a key enzyme in the biosynthesis of NADP. Catalyzes specifically the phosphorylation on 2'-hydroxyl of the adenosine moiety of NAD to yield NADP. The sequence is that of NAD kinase from Pectobacterium atrosepticum (strain SCRI 1043 / ATCC BAA-672) (Erwinia carotovora subsp. atroseptica).